A 296-amino-acid polypeptide reads, in one-letter code: Nucleotide-binding protein M28_Spy0517 (296 aa).

Position 13–20 (13–20) interacts with ATP; sequence GMSGAGKT. A GTP-binding site is contributed by 63–66; it reads DMRS.

Belongs to the RapZ-like family.

Functionally, displays ATPase and GTPase activities. The sequence is that of Nucleotide-binding protein M28_Spy0517 from Streptococcus pyogenes serotype M28 (strain MGAS6180).